Here is a 382-residue protein sequence, read N- to C-terminus: Succinyl-diaminopimelate desuccinylase (382 aa).

Histidine 73 is a Zn(2+) binding site. Aspartate 75 is an active-site residue. Aspartate 106 provides a ligand contact to Zn(2+). Glutamate 140 acts as the Proton acceptor in catalysis. Zn(2+)-binding residues include glutamate 141, glutamate 169, and histidine 355.

This sequence belongs to the peptidase M20A family. DapE subfamily. In terms of assembly, homodimer. The cofactor is Zn(2+). Requires Co(2+) as cofactor.

It catalyses the reaction N-succinyl-(2S,6S)-2,6-diaminopimelate + H2O = (2S,6S)-2,6-diaminopimelate + succinate. It participates in amino-acid biosynthesis; L-lysine biosynthesis via DAP pathway; LL-2,6-diaminopimelate from (S)-tetrahydrodipicolinate (succinylase route): step 3/3. Catalyzes the hydrolysis of N-succinyl-L,L-diaminopimelic acid (SDAP), forming succinate and LL-2,6-diaminopimelate (DAP), an intermediate involved in the bacterial biosynthesis of lysine and meso-diaminopimelic acid, an essential component of bacterial cell walls. The protein is Succinyl-diaminopimelate desuccinylase of Leptothrix cholodnii (strain ATCC 51168 / LMG 8142 / SP-6) (Leptothrix discophora (strain SP-6)).